The chain runs to 310 residues: Olfactory receptor 5P52 (310 aa).

Residues 1 to 25 (MEAENHTTVAELIILGLTEDPKLCI) are Extracellular-facing. Asparagine 5 is a glycosylation site (N-linked (GlcNAc...) asparagine). A helical transmembrane segment spans residues 26-46 (VFFVIFLGVYIITLVGNISII). Over 47–54 (TLIRISSQ) the chain is Cytoplasmic. Residues 55-75 (LHTPMYLFLSHLAFVDIVFST) traverse the membrane as a helical segment. Residues 76–99 (SVSVIMLMELLGHGLVLSVATCAA) lie on the Extracellular side of the membrane. Cysteine 97 and cysteine 189 form a disulfide bridge. The chain crosses the membrane as a helical span at residues 100 to 120 (QLCMTVSFGSAECFLLAAMAY). The Cytoplasmic segment spans residues 121–133 (DRYVAICSPLLYS). Residues 134 to 154 (TLMSSRVCFLLLGISYVGGFV) form a helical membrane-spanning segment. The Extracellular portion of the chain corresponds to 155 to 196 (NGWTFTGCVLSLSFCGPTQINHFFCDFSPLLKVSCSDVSIIG). The helical transmembrane segment at 197-217 (IIPSISSGSIIVVTVFVIAVS) threads the bilayer. Topologically, residues 218–237 (YIYILITILKMRSTEGRHKA) are cytoplasmic. The chain crosses the membrane as a helical span at residues 238-258 (FSTCTSHLTAVTLFYGTITVI). Residues 259–271 (YVMPKSSYSTEQN) lie on the Extracellular side of the membrane. The helical transmembrane segment at 272-292 (KVISLFYTVVIPMLNPLIYSL) threads the bilayer. At 293–310 (RNRDVKDALRKAIVRVYS) the chain is on the cytoplasmic side.

This sequence belongs to the G-protein coupled receptor 1 family.

The protein resides in the cell membrane. Potential odorant receptor. This Mus musculus (Mouse) protein is Olfactory receptor 5P52.